A 240-amino-acid chain; its full sequence is Alkaline phosphatase synthesis transcriptional regulatory protein PhoP (240 aa).

The Response regulatory domain occupies Lys-4–Leu-118. Asp-53 carries the 4-aspartylphosphate modification. Positions Glu-136 to Glu-235 form a DNA-binding region, ompR/PhoB-type.

Phosphorylated by PhoR.

It localises to the cytoplasm. Member of the two-component regulatory system PhoP/PhoR involved in the regulation of alkaline phosphatase genes phoA and phoB and of phosphodiesterase. The polypeptide is Alkaline phosphatase synthesis transcriptional regulatory protein PhoP (phoP) (Bacillus subtilis (strain 168)).